A 313-amino-acid chain; its full sequence is Ribosomal RNA small subunit methyltransferase H (313 aa).

Residues 33-35 (AGH), Glu52, Phe80, Asp101, and Gln108 each bind S-adenosyl-L-methionine.

It belongs to the methyltransferase superfamily. RsmH family.

The protein localises to the cytoplasm. It carries out the reaction cytidine(1402) in 16S rRNA + S-adenosyl-L-methionine = N(4)-methylcytidine(1402) in 16S rRNA + S-adenosyl-L-homocysteine + H(+). Its function is as follows. Specifically methylates the N4 position of cytidine in position 1402 (C1402) of 16S rRNA. The chain is Ribosomal RNA small subunit methyltransferase H from Spiroplasma kunkelii.